Here is a 187-residue protein sequence, read N- to C-terminus: Large ribosomal subunit protein mL49 (187 aa).

The protein belongs to the mitochondrion-specific ribosomal protein mL49 family.

It localises to the mitochondrion. The protein is Large ribosomal subunit protein mL49 (mrpl-49) of Caenorhabditis elegans.